The chain runs to 123 residues: Transmembrane protein 049L (123 aa).

2 helical membrane passes run 67–87 and 104–121; these read VFGALCVAFGIMLIGFLLWLV and LSLQQMVFLITTCIGVYN.

It is found in the membrane. In Acheta domesticus (House cricket), this protein is Transmembrane protein 049L.